Reading from the N-terminus, the 195-residue chain is Probable serine/threonine-protein kinase BUD32 homolog (195 aa).

In terms of domain architecture, Protein kinase spans 1-195 (MKVYLGGEAE…GRYVERVSMG (195 aa)). Lysine 12 contributes to the ATP binding site. The Proton acceptor role is filled by aspartate 107.

Belongs to the protein kinase superfamily. Tyr protein kinase family. BUD32 subfamily.

It localises to the cytoplasm. The enzyme catalyses L-seryl-[protein] + ATP = O-phospho-L-seryl-[protein] + ADP + H(+). It carries out the reaction L-threonyl-[protein] + ATP = O-phospho-L-threonyl-[protein] + ADP + H(+). In terms of biological role, could be involved in the formation of a threonylcarbamoyl group on adenosine at position 37 (t(6)A37) in tRNAs that read codons beginning with adenine. This chain is Probable serine/threonine-protein kinase BUD32 homolog, found in Archaeoglobus fulgidus (strain ATCC 49558 / DSM 4304 / JCM 9628 / NBRC 100126 / VC-16).